A 61-amino-acid chain; its full sequence is Probradykinin-2 (61 aa).

The first 22 residues, 1–22 (MSFLKKSLFLVLFLGLVSFSIC), serve as a signal peptide directing secretion. The propeptide occupies 23 to 50 (EEEKRETEEEENEDEIEEQSEEKKRFEP). The interval 24–61 (EEKRETEEEENEDEIEEQSEEKKRFEPVPPGFTPFRQT) is disordered. Positions 30 to 42 (EEEENEDEIEEQS) are enriched in acidic residues. P52 carries the post-translational modification 4-hydroxyproline.

It belongs to the frog skin active peptide (FSAP) family. Bradykinin-related peptide subfamily. In terms of tissue distribution, expressed by the skin glands.

It localises to the secreted. May produce in vitro relaxation of rat arterial smooth muscle and constriction of intestinal smooth muscle. May target bradykinin receptors (BDKRB). In Pithecopus azureus (Orange-legged monkey tree frog), this protein is Probradykinin-2.